The chain runs to 144 residues: Transcription antitermination protein NusB (144 aa).

Belongs to the NusB family.

Its function is as follows. Involved in transcription antitermination. Required for transcription of ribosomal RNA (rRNA) genes. Binds specifically to the boxA antiterminator sequence of the ribosomal RNA (rrn) operons. The sequence is that of Transcription antitermination protein NusB from Haemophilus influenzae (strain 86-028NP).